The following is a 256-amino-acid chain: Thiazole synthase (256 aa).

Lysine 98 serves as the catalytic Schiff-base intermediate with DXP. 1-deoxy-D-xylulose 5-phosphate-binding positions include glycine 159, 185–186, and 207–208; these read AG and NT.

Belongs to the ThiG family. As to quaternary structure, homotetramer. Forms heterodimers with either ThiH or ThiS.

Its subcellular location is the cytoplasm. The enzyme catalyses [ThiS sulfur-carrier protein]-C-terminal-Gly-aminoethanethioate + 2-iminoacetate + 1-deoxy-D-xylulose 5-phosphate = [ThiS sulfur-carrier protein]-C-terminal Gly-Gly + 2-[(2R,5Z)-2-carboxy-4-methylthiazol-5(2H)-ylidene]ethyl phosphate + 2 H2O + H(+). The protein operates within cofactor biosynthesis; thiamine diphosphate biosynthesis. Functionally, catalyzes the rearrangement of 1-deoxy-D-xylulose 5-phosphate (DXP) to produce the thiazole phosphate moiety of thiamine. Sulfur is provided by the thiocarboxylate moiety of the carrier protein ThiS. In vitro, sulfur can be provided by H(2)S. The polypeptide is Thiazole synthase (Aliivibrio salmonicida (strain LFI1238) (Vibrio salmonicida (strain LFI1238))).